Consider the following 415-residue polypeptide: Protein-lysine N-trimethyltransferase SMYD5 (415 aa).

Residues 20-351 form the SET domain; that stretch reads NCVDVRFINN…PGEEICISYL (332 aa). Residues 95 to 135 form an MYND-type zinc finger; the sequence is PHPELCKVRPDRHQACPQCQVMYCSSECRQAAMDQYHKILC. Y350 is a binding site for S-adenosyl-L-methionine. The segment at 388–415 is disordered; that stretch reads DMTSEDEEEVEGEGETEGEDMEDEMTDV.

Belongs to the class V-like SAM-binding methyltransferase superfamily. As to expression, expressed at high levels in the ovary and at lower levels in the fin, testis and brain.

Its subcellular location is the cytoplasm. It carries out the reaction L-lysyl-[protein] + 3 S-adenosyl-L-methionine = N(6),N(6),N(6)-trimethyl-L-lysyl-[protein] + 3 S-adenosyl-L-homocysteine + 3 H(+). It catalyses the reaction L-lysyl(20)-[histone H4] + 3 S-adenosyl-L-methionine = N(6),N(6),N(6)-trimethyl-L-lysyl(20)-[histone H4] + 3 S-adenosyl-L-homocysteine + 3 H(+). The enzyme catalyses L-lysyl(36)-[histone H3] + 3 S-adenosyl-L-methionine = N(6),N(6),N(6)-trimethyl-L-lysyl(36)-[histone H3] + 3 S-adenosyl-L-homocysteine + 3 H(+). Protein-lysine N-trimethyltransferase that specifically catalyzes trimethylation of 'Lys-22' of the RPL40/eL40 subunit of the 60S ribosome, thereby promoting translation elongation and protein synthesis. May also act as a histone methyltransferase in the context of histone octamers, but not on nucleosome substrates: trimethylates 'Lys-36' of histone H3 and 'Lys-20' of histone H4 to form H3K36me3 and H4K20me3, respectively. The histone methyltransferase activity, which is independent of its SET domain, is however unsure in vivo. Plays a crucial role in hematopoiesis during embryogenesis by negatively regulating expression of genes related to both primitive and definitive hematopoiesis. The polypeptide is Protein-lysine N-trimethyltransferase SMYD5 (Danio rerio (Zebrafish)).